The following is a 377-amino-acid chain: Alkane 1-monooxygenase 2 (377 aa).

A run of 4 helical transmembrane segments spans residues 17-37 (GYWI…WSLG), 43-63 (AWPW…DAIV), 87-107 (VLSL…GWIL), and 116-136 (VGQL…GITV). Fe cation contacts are provided by H138, H142, H168, H172, and H173. Residues 236 to 256 (ALFLLGFSLAFGWLGAIFFLG) traverse the membrane as a helical segment. 3 residues coordinate Fe cation: H312, H315, and H316.

It belongs to the fatty acid desaturase type 1 family. AlkB subfamily. Fe(3+) is required as a cofactor.

It localises to the cell inner membrane. The catalysed reaction is octane + 2 reduced [rubredoxin] + O2 + 2 H(+) = 2 oxidized [rubredoxin] + octan-1-ol + H2O. It functions in the pathway hydrocarbon metabolism; alkane degradation. Functionally, catalyzes the hydroxylation of n-alkanes in the presence of a NADH-rubredoxin reductase and rubredoxin. It preferably hydroxylases C12-C20 hydrocarbons. The chain is Alkane 1-monooxygenase 2 (alkB2) from Pseudomonas aeruginosa (strain ATCC 15692 / DSM 22644 / CIP 104116 / JCM 14847 / LMG 12228 / 1C / PRS 101 / PAO1).